The following is a 279-amino-acid chain: NADH dehydrogenase [ubiquinone] iron-sulfur protein 3, mitochondrial (279 aa).

The transit peptide at Met-1–Arg-27 directs the protein to the mitochondrion. Residues Glu-249 to Lys-279 form a disordered region. Over residues Glu-270–Lys-279 the composition is skewed to basic and acidic residues.

Belongs to the complex I 30 kDa subunit family. As to quaternary structure, core subunit of respiratory chain NADH dehydrogenase (Complex I).

The protein resides in the mitochondrion inner membrane. It catalyses the reaction a ubiquinone + NADH + 5 H(+)(in) = a ubiquinol + NAD(+) + 4 H(+)(out). Functionally, core subunit of the mitochondrial membrane respiratory chain NADH dehydrogenase (Complex I) which catalyzes electron transfer from NADH through the respiratory chain, using ubiquinone as an electron acceptor. Plays a role in cell wall integrity and is involved in osmotic and oxidative resistance, yeast to hypha transition and the ability to damage and invade oral epithelial cells. In Candida albicans (strain SC5314 / ATCC MYA-2876) (Yeast), this protein is NADH dehydrogenase [ubiquinone] iron-sulfur protein 3, mitochondrial (ALI1).